The following is a 545-amino-acid chain: 2-succinyl-5-enolpyruvyl-6-hydroxy-3-cyclohexene-1-carboxylate synthase (545 aa).

This sequence belongs to the TPP enzyme family. MenD subfamily. As to quaternary structure, homodimer. Mg(2+) is required as a cofactor. It depends on Mn(2+) as a cofactor. Thiamine diphosphate serves as cofactor.

It catalyses the reaction isochorismate + 2-oxoglutarate + H(+) = 5-enolpyruvoyl-6-hydroxy-2-succinyl-cyclohex-3-ene-1-carboxylate + CO2. Its pathway is quinol/quinone metabolism; 1,4-dihydroxy-2-naphthoate biosynthesis; 1,4-dihydroxy-2-naphthoate from chorismate: step 2/7. It functions in the pathway quinol/quinone metabolism; menaquinone biosynthesis. In terms of biological role, catalyzes the thiamine diphosphate-dependent decarboxylation of 2-oxoglutarate and the subsequent addition of the resulting succinic semialdehyde-thiamine pyrophosphate anion to isochorismate to yield 2-succinyl-5-enolpyruvyl-6-hydroxy-3-cyclohexene-1-carboxylate (SEPHCHC). This is 2-succinyl-5-enolpyruvyl-6-hydroxy-3-cyclohexene-1-carboxylate synthase from Nocardia farcinica (strain IFM 10152).